Consider the following 131-residue polypeptide: Glycine cleavage system H protein (131 aa).

The Lipoyl-binding domain occupies 24–106 (RAIVGISDHA…YGEGWIMVIE (83 aa)). K65 carries the N6-lipoyllysine modification.

It belongs to the GcvH family. In terms of assembly, the glycine cleavage system is composed of four proteins: P, T, L and H. It depends on (R)-lipoate as a cofactor.

Functionally, the glycine cleavage system catalyzes the degradation of glycine. The H protein shuttles the methylamine group of glycine from the P protein to the T protein. The polypeptide is Glycine cleavage system H protein (Xylella fastidiosa (strain 9a5c)).